The primary structure comprises 321 residues: Ribonuclease Z (321 aa).

Positions 62, 64, 66, 67, 139, 210, and 268 each coordinate Zn(2+). Aspartate 66 functions as the Proton acceptor in the catalytic mechanism.

The protein belongs to the RNase Z family. As to quaternary structure, homodimer. The cofactor is Zn(2+).

It catalyses the reaction Endonucleolytic cleavage of RNA, removing extra 3' nucleotides from tRNA precursor, generating 3' termini of tRNAs. A 3'-hydroxy group is left at the tRNA terminus and a 5'-phosphoryl group is left at the trailer molecule.. Zinc phosphodiesterase, which displays some tRNA 3'-processing endonuclease activity. Probably involved in tRNA maturation, by removing a 3'-trailer from precursor tRNA. The polypeptide is Ribonuclease Z (Trichodesmium erythraeum (strain IMS101)).